We begin with the raw amino-acid sequence, 500 residues long: NAD(P)H-quinone oxidoreductase chain 4, chloroplastic (500 aa).

The next 14 helical transmembrane spans lie at 4–24 (FPWL…MLFL), 35–55 (YTIC…CYNF), 87–107 (IGTI…AFPV), 113–130 (LFHF…GSFS), 134–154 (LLLF…LLAM), 167–187 (FILY…GLSL), 211–231 (ILFY…IPLH), 242–262 (HYST…YGLV), 272–292 (AHSM…IYAA), 305–325 (IAYS…SITD), 330–350 (GAIL…FLAG), 386–406 (LALP…GIIT), 416–436 (ILII…LLSM), and 462–482 (LFLS…PDFV).

The protein belongs to the complex I subunit 4 family.

Its subcellular location is the plastid. It localises to the chloroplast thylakoid membrane. It carries out the reaction a plastoquinone + NADH + (n+1) H(+)(in) = a plastoquinol + NAD(+) + n H(+)(out). The catalysed reaction is a plastoquinone + NADPH + (n+1) H(+)(in) = a plastoquinol + NADP(+) + n H(+)(out). The sequence is that of NAD(P)H-quinone oxidoreductase chain 4, chloroplastic from Lepidium virginicum (Virginia pepperweed).